Consider the following 541-residue polypeptide: Chaperonin GroEL 5 (541 aa).

ATP contacts are provided by residues 30 to 33 (TLGP), Gly-415, and Asp-496.

The protein belongs to the chaperonin (HSP60) family. Forms a cylinder of 14 subunits composed of two heptameric rings stacked back-to-back. Interacts with the co-chaperonin GroES.

The protein resides in the cytoplasm. The catalysed reaction is ATP + H2O + a folded polypeptide = ADP + phosphate + an unfolded polypeptide.. Together with its co-chaperonin GroES, plays an essential role in assisting protein folding. The GroEL-GroES system forms a nano-cage that allows encapsulation of the non-native substrate proteins and provides a physical environment optimized to promote and accelerate protein folding. This is Chaperonin GroEL 5 from Bradyrhizobium diazoefficiens (strain JCM 10833 / BCRC 13528 / IAM 13628 / NBRC 14792 / USDA 110).